We begin with the raw amino-acid sequence, 67 residues long: Large ribosomal subunit protein uL29 (67 aa).

This sequence belongs to the universal ribosomal protein uL29 family.

The protein is Large ribosomal subunit protein uL29 of Sphingopyxis alaskensis (strain DSM 13593 / LMG 18877 / RB2256) (Sphingomonas alaskensis).